Consider the following 278-residue polypeptide: Cytoplasmic envelopment protein 1 (278 aa).

Belongs to the herpesviridae cytoplasmic envelopment protein 1 family. As to quaternary structure, interacts with BSRF1 tegument protein; the BBRF2-BSRF1 complexes oligomerize and might play a role in tethering the viral nucleocapsids to the host Golgi membrane during secondary envelopment.

The protein localises to the virion. The protein resides in the virion tegument. Its subcellular location is the host cytoplasm. It localises to the host Golgi apparatus. Functionally, plays a critical role in cytoplasmic virus egress. Participates in the final step of tegumentation and envelope acquisition within the host cytoplasm. The sequence is that of Cytoplasmic envelopment protein 1 from Homo sapiens (Human).